The chain runs to 2177 residues: Protein sidekick-2 (2177 aa).

An N-terminal signal peptide occupies residues 1 to 26 (MKGLGVPAAALLWGGLSALLPPSLPA). Residues 27–1937 (DDVSPYFKTE…ANPFYEEWWF (1911 aa)) are Extracellular-facing. 6 consecutive Ig-like C2-type domains span residues 31–113 (PYFK…TEVQ), 118–205 (GSFE…QPIT), 220–299 (PTII…SSVP), 313–401 (PQFV…TYLA), 407–496 (PNIT…ADLV), and 501–590 (TRIT…AHLR). A disulfide bridge connects residues Cys53 and Cys96. Residues Asn198 and Asn228 are each glycosylated (N-linked (GlcNAc...) asparagine). 2 disulfide bridges follow: Cys242/Cys289 and Cys335/Cys385. N-linked (GlcNAc...) asparagine glycosylation occurs at Asn408. 2 cysteine pairs are disulfide-bonded: Cys428-Cys480 and Cys522-Cys574. Asn582, Asn614, Asn709, Asn748, Asn809, Asn941, and Asn953 each carry an N-linked (GlcNAc...) asparagine glycan. Fibronectin type-III domains lie at 597 to 693 (APES…LPEE), 698 to 794 (PPQN…TLQG), 799 to 898 (PPGN…THED), 902 to 996 (PVGH…VPPE), 1000 to 1099 (APTN…TLQA), 1104 to 1202 (APAN…TRES), 1207 to 1304 (GPSN…TLDD), 1305 to 1402 (VPGP…TEKR), 1407 to 1504 (PPSK…TLQA), 1509 to 1626 (APTI…VGEA), 1631 to 1727 (APQN…TQQA), 1731 to 1826 (APGS…TGPG), and 1829 to 1928 (APGP…AQKA). 11 N-linked (GlcNAc...) asparagine glycosylation sites follow: Asn1107, Asn1210, Asn1261, Asn1346, Asn1462, Asn1580, Asn1593, Asn1675, Asn1694, Asn1746, and Asn1820. Residues 1938 to 1958 (LVVIALVGLIFILLLVFVLII) traverse the membrane as a helical segment. The Cytoplasmic segment spans residues 1959-2177 (RGQSKKYAKK…APIGGFSSFV (219 aa)). Disordered regions lie at residues 2044–2071 (AESSSLTEKPSEVSDSQGSDSEYEVDPA) and 2103–2177 (QAYS…SSFV). Composition is skewed to polar residues over residues 2045 to 2063 (ESSSLTEKPSEVSDSQGSD) and 2119 to 2130 (PLSNSTSTQQGS). Pro residues predominate over residues 2142-2151 (PQTPGNPPSQ). The PDZ-binding motif lies at 2171–2177 (GGFSSFV).

The protein belongs to the sidekick family. In terms of assembly, homodimer; mediates homophilic interactions to promote cell adhesion. Expressed by non-overlapping subsets of retinal neurons. SDK1, SDK2, DSCAM and DSCAML1 are expressed in non-overlapping subsets of interneurons and retinal ganglion cells (RGCs) that form synapses in distinct inner plexiform layer (IPL) sublaminae.

It is found in the cell membrane. It localises to the synapse. In terms of biological role, adhesion molecule that promotes lamina-specific synaptic connections in the retina. Expressed in specific subsets of interneurons and retinal ganglion cells (RGCs) and promotes synaptic connectivity via homophilic interactions. This chain is Protein sidekick-2, found in Gallus gallus (Chicken).